Reading from the N-terminus, the 819-residue chain is Nonribosomal peptide synthetase 9 (819 aa).

The tract at residues 202–591 is adenylation (A) domain; it reads LQAPTQHAVR…GRKDTQAKIR (390 aa). The Carrier domain occupies 722–798; that stretch reads QPRNERERLI…SLAEFLSSSS (77 aa). Position 759 is an O-(pantetheine 4'-phosphoryl)serine (serine 759).

It belongs to the NRP synthetase family.

It participates in secondary metabolite biosynthesis. Its function is as follows. Nonribosomal peptide synthetase; part of the Fg3_54/C64 gene cluster that mediates the biosynthesis of the octapeptide fusaoctaxin A, a virulence factor that is required for cell-to-cell invasiveness of plant host. The 2 nonribosomal peptide synthetases NRPS9 and NRPS5 form an assembly line which likely utilizes GABA as a starter unit (loaded on the unique module M1 of NRPS9) and sequentially incorporates seven extender units composed of the residues L-Ala, L-allo-Ile, L-Ser, L-Val, L-Ser, L-Leu and L-Leu, respectively. During the process, each of the residues that are tethered on modules M3-M7 of NRPS5 containing an E domain can undergo an epimerization reaction to produce a D-configuration before the transpeptidation reaction occurs. The elongation of the peptidyl chain might be terminated by module M8-mediated L-Leu incorporation, followed by R domain-catalyzed 4 electron reduction to release the resulting octapeptide from the assembly line as an alcohol. Fusaoctaxin A is cleaved by the cluster specific ABC transporter FGM5 to the pentapeptide fusapentaxin A and the tripeptide fusatrixin A. The other enzymes from the cluster, FGM1, FGM2, FGM3 and FGM9 seem not to be involved in the biosynthesis of fusaoctaxin A and their functions have still to be determined. In Gibberella zeae (strain ATCC MYA-4620 / CBS 123657 / FGSC 9075 / NRRL 31084 / PH-1) (Wheat head blight fungus), this protein is Nonribosomal peptide synthetase 9.